The sequence spans 140 residues: Ergosterol biosynthetic protein 28 homolog (140 aa).

4 helical membrane passes run 4–24 (FLNVLRSWLVMVSIIAMGNTL), 52–72 (TFGIWTLLSSVIRCLCAIDIH), 79–99 (ITLWTFLLALGHFLSELFVFG), and 105–125 (VGVLAPLMVASFSILGMLVGL).

This sequence belongs to the ERG28 family.

The protein resides in the endoplasmic reticulum membrane. The chain is Ergosterol biosynthetic protein 28 homolog from Mus musculus (Mouse).